A 150-amino-acid chain; its full sequence is MGLEKSFILFSLLVLVLGWVQPSLGRKPSVQDFKRQHMDPGSPPNSRPTICNQMMKRRGITKDSCKPVNTFLHESGQRVQAICSQRQMTCKTSSRKNCHKSSSTLHITDCNLKGSSKYPNCDYTTTNRQKHIIIACEGNPLVPVHYDASV.

A signal peptide spans 1–25 (MGLEKSFILFSLLVLVLGWVQPSLG). R35 provides a ligand contact to substrate. The Proton acceptor role is filled by H37. 4 disulfide bridges follow: C51/C110, C65/C121, C83/C136, and C90/C98. Residues 66–70 (KPVNT) and K91 contribute to the substrate site. The active-site Proton donor is H145.

The protein belongs to the pancreatic ribonuclease family. Monomer.

The protein localises to the secreted. The enzyme catalyses an [RNA] containing cytidine + H2O = an [RNA]-3'-cytidine-3'-phosphate + a 5'-hydroxy-ribonucleotide-3'-[RNA].. It catalyses the reaction an [RNA] containing uridine + H2O = an [RNA]-3'-uridine-3'-phosphate + a 5'-hydroxy-ribonucleotide-3'-[RNA].. Its function is as follows. Endonuclease that catalyzes the cleavage of RNA on the 3' side of pyrimidine nucleotides. Acts on single-stranded and double-stranded RNA. This Rattus tiomanicus (Malayan field rat) protein is Ribonuclease pancreatic delta-type.